The sequence spans 242 residues: Probable septum site-determining protein MinC (242 aa).

This sequence belongs to the MinC family. Interacts with MinD and FtsZ.

In terms of biological role, cell division inhibitor that blocks the formation of polar Z ring septums. Rapidly oscillates between the poles of the cell to destabilize FtsZ filaments that have formed before they mature into polar Z rings. Prevents FtsZ polymerization. The sequence is that of Probable septum site-determining protein MinC from Agrobacterium fabrum (strain C58 / ATCC 33970) (Agrobacterium tumefaciens (strain C58)).